A 235-amino-acid polypeptide reads, in one-letter code: Modulator of macroautophagy TMEM150B (235 aa).

Over 1–8 (MWGYLSLL) the chain is Cytoplasmic. The helical transmembrane segment at 9-29 (PMCLAFWAIAGIWTVFSLAVV) threads the bilayer. Residues 30–51 (NKAVNLTDGFPYISVCGNVPPQ) lie on the Extracellular side of the membrane. The N-linked (GlcNAc...) asparagine glycan is linked to Asn34. Residues 52–72 (SCIFSQVLNIGAASAAWICIL) form a helical membrane-spanning segment. Residues 73-88 (RYYQLRDWGVRKWHNQ) are Cytoplasmic-facing. A helical membrane pass occupies residues 89–109 (VILWTGLLCALGTSIVGNFQE). Topologically, residues 110 to 116 (KNQRATH) are extracellular. The helical transmembrane segment at 117–137 (LTGAFLAFFVGIVYFWLQLFL) threads the bilayer. Residues 138-156 (SWRMKNLPQPGAPWIGPLR) lie on the Cytoplasmic side of the membrane. Residues 157 to 177 (LVLCSACFILEVAMVVLHSWS) traverse the membrane as a helical segment. Residues 178-180 (MRS) lie on the Extracellular side of the membrane. Residues 181–201 (VSAICEWVAAMLLFILFGLLA) form a helical membrane-spanning segment. The Cytoplasmic segment spans residues 202-235 (VDFSRLDSCTLCLQPGSGSLRPPPDSPTSLHVQL).

The protein belongs to the DRAM/TMEM150 family.

The protein localises to the cell membrane. The protein resides in the endosome membrane. It is found in the cytoplasmic vesicle. It localises to the autophagosome membrane. Its function is as follows. Modulator of macroautophagy that causes accumulation of autophagosomes under basal conditions and enhances autophagic flux. Represses cell death and promotes long-term clonogenic survival of cells grown in the absence of glucose in a macroautophagy-independent manner. May have some role in extracellular matrix engulfment or growth factor receptor recycling, both of which can modulate cell survival. This chain is Modulator of macroautophagy TMEM150B, found in Bos taurus (Bovine).